The following is a 250-amino-acid chain: Probable replication-associated protein repA2 (250 aa).

This sequence belongs to the IncFII RepA family.

Its function is as follows. This protein is essential for plasmid replication; it is involved in copy control functions. The protein is Probable replication-associated protein repA2 (repA2) of Buchnera aphidicola subsp. Schizaphis graminum (strain Sg).